A 196-amino-acid chain; its full sequence is Carnitine operon protein CaiE (196 aa).

The interval 173–196 is disordered; the sequence is TQPLRQMEENRPRLQGTTDVTPKR. Over residues 187 to 196 the composition is skewed to polar residues; it reads QGTTDVTPKR.

It belongs to the transferase hexapeptide repeat family.

The protein operates within amine and polyamine metabolism; carnitine metabolism. Functionally, overproduction of CaiE stimulates the activity of CaiB and CaiD. The polypeptide is Carnitine operon protein CaiE (Escherichia coli O7:K1 (strain IAI39 / ExPEC)).